The following is a 637-amino-acid chain: Limonene/alpha-pinene synthase, chloroplastic (637 aa).

The transit peptide at 1–56 (MALLSIVSLQVPKSCGLKSLISSSNVQKALCISTAVPTLRMRRRQKALVINMKLTT) directs the protein to the chloroplast. Aspartate 388, aspartate 392, and aspartate 540 together coordinate Mg(2+). The short motif at 388–392 (DDMYD) is the DDXXD motif element.

This sequence belongs to the terpene synthase family. Tpsd subfamily. It depends on Mg(2+) as a cofactor. Mn(2+) is required as a cofactor. Requires K(+) as cofactor.

The protein resides in the plastid. It is found in the chloroplast. The catalysed reaction is (2E)-geranyl diphosphate = (4S)-limonene + diphosphate. It carries out the reaction (2E)-geranyl diphosphate = (1S,5S)-alpha-pinene + diphosphate. It functions in the pathway terpene metabolism; oleoresin biosynthesis. In terms of biological role, involved in defensive oleoresin formation in conifers in response to insect attack or other injury. Involved in monoterpene (C10) olefins biosynthesis. The polypeptide is Limonene/alpha-pinene synthase, chloroplastic (ag11) (Abies grandis (Grand fir)).